The sequence spans 283 residues: MQVILAKHAGFCFGVKRATQLAFQAANIGSETYTLGPIIHSPQVVQRLEEMGVIPVDNVSEVETGGTIIIRSHGVAAEELEAAVRANLEVVDATCPFVKKAQEHVATLSKEGYDIVVVGDAVHPEVQGIVSYAAGRVYVVSSHKDVERLPRMSKIGVVAQTTQSFEHLHEVVAACLARGGEARVYNTICDATAVRQEEAKKLAGAVDCMVVIGGFNSANTMRLAQICLELLPRTHHVETASQIDEQWFKGVKKVGVTAGASTPKWIIDEVIDRISAIDKDKIS.

Residue cysteine 12 participates in [4Fe-4S] cluster binding. (2E)-4-hydroxy-3-methylbut-2-enyl diphosphate-binding residues include histidine 40 and histidine 73. Dimethylallyl diphosphate is bound by residues histidine 40 and histidine 73. Residues histidine 40 and histidine 73 each contribute to the isopentenyl diphosphate site. A [4Fe-4S] cluster-binding site is contributed by cysteine 95. Histidine 123 lines the (2E)-4-hydroxy-3-methylbut-2-enyl diphosphate pocket. Histidine 123 lines the dimethylallyl diphosphate pocket. Histidine 123 lines the isopentenyl diphosphate pocket. The Proton donor role is filled by glutamate 125. A (2E)-4-hydroxy-3-methylbut-2-enyl diphosphate-binding site is contributed by threonine 161. Cysteine 189 contacts [4Fe-4S] cluster. (2E)-4-hydroxy-3-methylbut-2-enyl diphosphate is bound by residues serine 217, asparagine 219, and serine 261. Dimethylallyl diphosphate-binding residues include serine 217, asparagine 219, and serine 261. Isopentenyl diphosphate contacts are provided by serine 217, asparagine 219, and serine 261.

The protein belongs to the IspH family. Requires [4Fe-4S] cluster as cofactor.

It carries out the reaction isopentenyl diphosphate + 2 oxidized [2Fe-2S]-[ferredoxin] + H2O = (2E)-4-hydroxy-3-methylbut-2-enyl diphosphate + 2 reduced [2Fe-2S]-[ferredoxin] + 2 H(+). The enzyme catalyses dimethylallyl diphosphate + 2 oxidized [2Fe-2S]-[ferredoxin] + H2O = (2E)-4-hydroxy-3-methylbut-2-enyl diphosphate + 2 reduced [2Fe-2S]-[ferredoxin] + 2 H(+). The protein operates within isoprenoid biosynthesis; dimethylallyl diphosphate biosynthesis; dimethylallyl diphosphate from (2E)-4-hydroxy-3-methylbutenyl diphosphate: step 1/1. Its pathway is isoprenoid biosynthesis; isopentenyl diphosphate biosynthesis via DXP pathway; isopentenyl diphosphate from 1-deoxy-D-xylulose 5-phosphate: step 6/6. Its function is as follows. Catalyzes the conversion of 1-hydroxy-2-methyl-2-(E)-butenyl 4-diphosphate (HMBPP) into a mixture of isopentenyl diphosphate (IPP) and dimethylallyl diphosphate (DMAPP). Acts in the terminal step of the DOXP/MEP pathway for isoprenoid precursor biosynthesis. The polypeptide is 4-hydroxy-3-methylbut-2-enyl diphosphate reductase (Citrifermentans bemidjiense (strain ATCC BAA-1014 / DSM 16622 / JCM 12645 / Bem) (Geobacter bemidjiensis)).